The chain runs to 145 residues: Arginine repressor (145 aa).

Belongs to the ArgR family.

The protein resides in the cytoplasm. It participates in amino-acid biosynthesis; L-arginine biosynthesis [regulation]. Its function is as follows. Regulates arginine biosynthesis genes. The chain is Arginine repressor from Streptococcus equi subsp. zooepidemicus (strain H70).